Consider the following 352-residue polypeptide: tRNA N6-adenosine threonylcarbamoyltransferase (352 aa).

Residues histidine 115 and histidine 119 each contribute to the Fe cation site. Substrate-binding positions include 138 to 142, aspartate 171, glycine 184, and asparagine 276; that span reads LVSGG. Residue aspartate 304 participates in Fe cation binding.

Belongs to the KAE1 / TsaD family. It depends on Fe(2+) as a cofactor.

It localises to the cytoplasm. The catalysed reaction is L-threonylcarbamoyladenylate + adenosine(37) in tRNA = N(6)-L-threonylcarbamoyladenosine(37) in tRNA + AMP + H(+). Functionally, required for the formation of a threonylcarbamoyl group on adenosine at position 37 (t(6)A37) in tRNAs that read codons beginning with adenine. Is involved in the transfer of the threonylcarbamoyl moiety of threonylcarbamoyl-AMP (TC-AMP) to the N6 group of A37, together with TsaE and TsaB. TsaD likely plays a direct catalytic role in this reaction. This is tRNA N6-adenosine threonylcarbamoyltransferase from Xanthomonas axonopodis pv. citri (strain 306).